The sequence spans 384 residues: tRNA-specific 2-thiouridylase MnmA (384 aa).

ATP contacts are provided by residues 13 to 20 and Met39; that span reads GLSGGVDS. The interaction with target base in tRNA stretch occupies residues 99–101; sequence NPD. The active-site Nucleophile is Cys104. Cysteines 104 and 215 form a disulfide. Gly128 contributes to the ATP binding site. The segment at 165–167 is interaction with tRNA; it reads KDQ. Cys215 serves as the catalytic Cysteine persulfide intermediate. The segment at 333 to 334 is interaction with tRNA; the sequence is RY.

It belongs to the MnmA/TRMU family.

It is found in the cytoplasm. It carries out the reaction S-sulfanyl-L-cysteinyl-[protein] + uridine(34) in tRNA + AH2 + ATP = 2-thiouridine(34) in tRNA + L-cysteinyl-[protein] + A + AMP + diphosphate + H(+). Catalyzes the 2-thiolation of uridine at the wobble position (U34) of tRNA, leading to the formation of s(2)U34. The polypeptide is tRNA-specific 2-thiouridylase MnmA (Albidiferax ferrireducens (strain ATCC BAA-621 / DSM 15236 / T118) (Rhodoferax ferrireducens)).